The following is a 210-amino-acid chain: Outer-membrane lipoprotein carrier protein (210 aa).

Positions 1 to 23 (MLMFSRFRYIFFAVALLSGPVCA) are cleaved as a signal peptide.

It belongs to the LolA family. As to quaternary structure, monomer.

It localises to the periplasm. In terms of biological role, participates in the translocation of lipoproteins from the inner membrane to the outer membrane. Only forms a complex with a lipoprotein if the residue after the N-terminal Cys is not an aspartate (The Asp acts as a targeting signal to indicate that the lipoprotein should stay in the inner membrane). The protein is Outer-membrane lipoprotein carrier protein of Xylella fastidiosa (strain Temecula1 / ATCC 700964).